Consider the following 230-residue polypeptide: MRNLPIIALDFKSADEVHTFLNKFNEPLCVKIGMELFYQTGPALIKSIKKRGHDIFLDLKLHDIPNTVSKAMEGLARLDIDLVNVHAAGGIKMMEEAKKGLRKHNADIKIIAVTQLTSTTERQLHEEQNIQTSIEEAVLNYARLTKKAGLDGVVCSPLEAKMISKELGSDFLKVTPGIRPKGAARNDQQRITTPEEAKTLGSTHIVVGRPITQSEHPIDSYHKIKESWLS.

Residues aspartate 10, lysine 31, 58–67, threonine 117, arginine 179, glutamine 188, glycine 208, and arginine 209 each bind substrate; that span reads DLKLHDIPNT. The active-site Proton donor is the lysine 60.

The protein belongs to the OMP decarboxylase family. Type 1 subfamily. Homodimer.

The catalysed reaction is orotidine 5'-phosphate + H(+) = UMP + CO2. Its pathway is pyrimidine metabolism; UMP biosynthesis via de novo pathway; UMP from orotate: step 2/2. Catalyzes the decarboxylation of orotidine 5'-monophosphate (OMP) to uridine 5'-monophosphate (UMP). The protein is Orotidine 5'-phosphate decarboxylase of Staphylococcus epidermidis (strain ATCC 35984 / DSM 28319 / BCRC 17069 / CCUG 31568 / BM 3577 / RP62A).